Here is a 41-residue protein sequence, read N- to C-terminus: Protein UL21 homolog (41 aa).

It belongs to the herpesviridae UL21 family.

This chain is Protein UL21 homolog, found in Equine herpesvirus 4 (strain 1942) (EHV-4).